Here is a 193-residue protein sequence, read N- to C-terminus: Ion-translocating oxidoreductase complex subunit A (193 aa).

6 helical membrane passes run 5-25 (LLLF…FLGL), 39-59 (MGMG…AWLI), 63-83 (ILIP…VIAV), 102-122 (LLGI…VALL), 134-154 (ALYG…FAAI), and 171-191 (AIAL…SGLV).

It belongs to the NqrDE/RnfAE family. As to quaternary structure, the complex is composed of six subunits: RsxA, RsxB, RsxC, RsxD, RsxE and RsxG.

The protein localises to the cell inner membrane. Part of a membrane-bound complex that couples electron transfer with translocation of ions across the membrane. Required to maintain the reduced state of SoxR. The polypeptide is Ion-translocating oxidoreductase complex subunit A (Shigella flexneri serotype 5b (strain 8401)).